We begin with the raw amino-acid sequence, 153 residues long: Nucleoside diphosphate kinase (153 aa).

The ATP site is built by Lys13, Phe61, Arg89, Thr95, Arg106, and Asn116. A Phosphothreonine modification is found at Thr95. Catalysis depends on His119, which acts as the Pros-phosphohistidine intermediate.

The protein belongs to the NDK family. In terms of assembly, homohexamer and homotetramer. Interacts with TOM40 preferentially in an unfolded, unphosphorylated form. Requires Mg(2+) as cofactor. The N-terminus is blocked.

Its subcellular location is the cytoplasm. It is found in the mitochondrion intermembrane space. It carries out the reaction a 2'-deoxyribonucleoside 5'-diphosphate + ATP = a 2'-deoxyribonucleoside 5'-triphosphate + ADP. The enzyme catalyses a ribonucleoside 5'-diphosphate + ATP = a ribonucleoside 5'-triphosphate + ADP. Its function is as follows. Major role in the synthesis of nucleoside triphosphates other than ATP. The ATP gamma phosphate is transferred to the NDP beta phosphate via a ping-pong mechanism, using a phosphorylated active-site intermediate. Required for repair of UV radiation- and etoposide-induced DNA damage. This is Nucleoside diphosphate kinase (YNK1) from Saccharomyces cerevisiae (strain ATCC 204508 / S288c) (Baker's yeast).